The chain runs to 995 residues: Endo-beta-N-acetylglucosaminidase EndoS (995 aa).

A signal peptide spans 1-36; sequence MDKHLLVKRTLGCVCAATLMGAALATHHDSLNTVKA. In terms of domain architecture, GH18 spans 112-432; it reads SLYGGYFRTW…KDATDNIFHS (321 aa). A glycoprotein is bound by residues H151, W153, and R186. E235 functions as the Proton donor in the catalytic mechanism. 7 residues coordinate a glycoprotein: D237, Q303, Y305, E349, E350, N356, and Y402. 4 LRR repeats span residues 437–460, 478–503, 562–585, and 586–609; these read SKAL…DFPD, LERF…KFKK, LTGL…DAAT, and LTSL…ENRQ. Positions 765 to 923 are carbohydrate-binding module (CBM); sequence MVNLAEGATV…VPELQILGYP (159 aa). Ca(2+) contacts are provided by K786, D789, Q791, P915, and E916. Residues 924–995 form a three-helix bundle (3H) region; it reads LPNADTIMKT…CIEKRQLLKK (72 aa).

This sequence belongs to the glycosyl hydrolase 18 family. Post-translationally, cleaved by SpeB protease; leading to loss of endoglucosidase activity. EndoS is produced and secreted prior to SpeB, suggesting that it is degraded after acting as a host immune evasion factor.

The protein resides in the secreted. It is found in the host extracellular space. It carries out the reaction an N(4)-(oligosaccharide-(1-&gt;3)-[oligosaccharide-(1-&gt;6)]-beta-D-Man-(1-&gt;4)-beta-D-GlcNAc-(1-&gt;4)-alpha-D-GlcNAc)-L-asparaginyl-[protein] + H2O = an oligosaccharide-(1-&gt;3)-[oligosaccharide-(1-&gt;6)]-beta-D-Man-(1-&gt;4)-D-GlcNAc + N(4)-(N-acetyl-beta-D-glucosaminyl)-L-asparaginyl-[protein]. Endoglucosidase that acts as a host immune evasion factor by mediating hydrolysis of the N-linked glycan from the Fc region of host immunoglobulin-gamma (IgG) during infection. Specifically catalyzes the hydrolysis of the beta-1,4 linkage between the first two N-acetylglucosamine residues of the complex-type N-linked glycan located on 'Asn-297' of the Fc region of IgG antibodies (IGHG1, IGHG2, IGHG3 or IGHG4), thereby preventing interaction between IgGs and Fc receptors and ability to activate the complement pathway. Shows a specificity for biantennary complex type N-glycans; does neither cleave larger complex type glycans nor oligomannose and nor hybrid-type glycans. Specifically acts on IgGs; does not act on immunoglobulin alpha, beta, delta or mu. The chain is Endo-beta-N-acetylglucosaminidase EndoS from Streptococcus pyogenes serotype M1.